Consider the following 205-residue polypeptide: Ras-related protein rab-6.2 (205 aa).

GTP contacts are provided by residues 18–25 (EQSVGKTS), T42, 66–70 (TAGQE), and 124–127 (KTDL). Residues C203 and C205 are each lipidated (S-geranylgeranyl cysteine). Residue C205 is modified to Cysteine methyl ester.

It belongs to the small GTPase superfamily. Rab family. As to quaternary structure, interacts with GARP complex component vps-52. Interacts (in GTP-bound form) with lin-10. May interact (in GTP-bound form) with eat-17. Highly expressed in body wall muscles, pharyngeal and vulval muscles, hypodermis, intestine, the gonad, coelomocytes, and neurons, including command interneuron (at protein level). Highly expressed in the terminal bulb muscles.

Its subcellular location is the perikaryon. The protein localises to the cell projection. It localises to the dendrite. The protein resides in the golgi apparatus. It is found in the cytoplasmic vesicle. The small GTPases Rab are key regulators of intracellular membrane trafficking, from the formation of transport vesicles to their fusion with membranes. Rabs cycle between an inactive GDP-bound form and an active GTP-bound form that is able to recruit to membranes different set of downstream effectors directly responsible for vesicle formation, movement, tethering and fusion. In its active GTP-bound form, acts redundantly with rab-6.1 (in its active GTP-bound form) to positively regulate the retrograde trafficking of cargo molecules from endosomes to the Golgi compartment. Required for the retrograde trafficking of glr-1, a subunit of AMPA-type glutamate receptors (AMPRs), out of early endosomes and into the Golgi compartment in neurons. Its role in glr-1 trafficking may partly be mediated by its interaction with lin-10 and association with components of the retromer complex such as rme-8. Together with rab-6.2, promotes the retrograde trafficking of mig-14 from endosomes to Golgi structures in the intestine. Plays a role in the epidermis to promote cuticle integrity and impermeability of the cuticle barrier to exogenous molecules. May have a role in the glycosylation of the cuticular surface. Required for seam cell division and alae formation. Required for grinder formation, which is the feeding organ that breaks down food. In contrast to rab-6.1, may play a minor role in the exocytosis of secretory vesicles (cortical granules) during the oocyte-to-embryo transition. The chain is Ras-related protein rab-6.2 from Caenorhabditis elegans.